A 267-amino-acid polypeptide reads, in one-letter code: Membrane-spanning 4-domains subfamily A member 12 (267 aa).

Over 1–91 (MMSSKPTSHA…MNFKEEAKAL (91 aa)) the chain is Cytoplasmic. The chain crosses the membrane as a helical span at residues 92-112 (GVIQIMVGLMHIGFGIVLCLI). The Extracellular portion of the chain corresponds to 113–120 (SFSFREVL). Residues 121-141 (GFASTAVIGGYPFWGGLSFII) form a helical membrane-spanning segment. Topologically, residues 142–160 (SGSLSVSASKELSRCLVKG) are cytoplasmic. The chain crosses the membrane as a helical span at residues 161–181 (SLGMNIVSSILAFIGVILLLV). At 182 to 200 (DMCINGVAGQDYWAVLSGK) the chain is on the extracellular side. Residues 201–221 (GISATLMIFSLLEFFVACATA) form a helical membrane-spanning segment. Topologically, residues 222-267 (HFANQANTTTNMSVLVIPNMYESNPVTPASSSAPPRCNNYSANAPK) are cytoplasmic. The segment at 248-267 (TPASSSAPPRCNNYSANAPK) is disordered.

This sequence belongs to the MS4A family.

It localises to the membrane. Its function is as follows. May be involved in signal transduction as a component of a multimeric receptor complex. The protein is Membrane-spanning 4-domains subfamily A member 12 (MS4A12) of Homo sapiens (Human).